The primary structure comprises 309 residues: Tagatose-6-phosphate kinase (309 aa).

It belongs to the carbohydrate kinase PfkB family. LacC subfamily.

It catalyses the reaction D-tagatofuranose 6-phosphate + ATP = D-tagatofuranose 1,6-bisphosphate + ADP + H(+). It functions in the pathway carbohydrate metabolism; D-tagatose 6-phosphate degradation; D-glyceraldehyde 3-phosphate and glycerone phosphate from D-tagatose 6-phosphate: step 1/2. The polypeptide is Tagatose-6-phosphate kinase (Streptococcus pyogenes serotype M18 (strain MGAS8232)).